Here is a 79-residue protein sequence, read N- to C-terminus: CDC42 small effector protein 1 (79 aa).

S-palmitoyl cysteine attachment occurs at residues Cys-10 and Cys-11. Residues 30–43 enclose the CRIB domain; that stretch reads IGEPMNFVHLTHIG. Residues 48-79 form a disordered region; sequence GAGDGLAMTGAVQEQMRSKGNRDRPWSNSRGL. Residues 63–72 show a composition bias toward basic and acidic residues; the sequence is MRSKGNRDRP.

It belongs to the CDC42SE/SPEC family. Interacts with CDC42 (in GTP-bound form). Interacts weakly with RAC1 and not at all with RHOA.

The protein localises to the cytoplasm. It is found in the cytoskeleton. The protein resides in the cell membrane. Its function is as follows. Probably involved in the organization of the actin cytoskeleton by acting downstream of CDC42, inducing actin filament assembly. Alters CDC42-induced cell shape changes. In activated T-cells, may play a role in CDC42-mediated F-actin accumulation at the immunological synapse. May play a role in early contractile events in phagocytosis in macrophages. The polypeptide is CDC42 small effector protein 1 (CDC42SE1) (Pongo abelii (Sumatran orangutan)).